The primary structure comprises 166 residues: Antibacterial peptide PMAP-36 (166 aa).

An N-terminal signal peptide occupies residues 1–29; the sequence is METQRASLCLGRWSLWLLLLGLVVPSASA. The propeptide occupies 30 to 129; sequence QALSYREAVL…LDINCDEIQS (100 aa). Disulfide bonds link Cys85-Cys96 and Cys107-Cys124.

This sequence belongs to the cathelicidin family.

Its subcellular location is the secreted. Exerts antimicrobial activity against both Gram-positive and negative bacteria. Its activity appears to be mediated by its ability to damage bacterial membranes. The sequence is that of Antibacterial peptide PMAP-36 (PMAP36) from Sus scrofa (Pig).